The sequence spans 254 residues: 3-deoxy-manno-octulosonate cytidylyltransferase (254 aa).

The protein belongs to the KdsB family.

It is found in the cytoplasm. The catalysed reaction is 3-deoxy-alpha-D-manno-oct-2-ulosonate + CTP = CMP-3-deoxy-beta-D-manno-octulosonate + diphosphate. It functions in the pathway nucleotide-sugar biosynthesis; CMP-3-deoxy-D-manno-octulosonate biosynthesis; CMP-3-deoxy-D-manno-octulosonate from 3-deoxy-D-manno-octulosonate and CTP: step 1/1. It participates in bacterial outer membrane biogenesis; lipopolysaccharide biosynthesis. In terms of biological role, activates KDO (a required 8-carbon sugar) for incorporation into bacterial lipopolysaccharide in Gram-negative bacteria. The sequence is that of 3-deoxy-manno-octulosonate cytidylyltransferase from Chlamydia pneumoniae (Chlamydophila pneumoniae).